Reading from the N-terminus, the 248-residue chain is 2,3-bisphosphoglycerate-dependent phosphoglycerate mutase (248 aa).

Residues Arg-8–Asn-15, Thr-21–Gly-22, Arg-60, Glu-87–Tyr-90, Lys-98, Arg-114–Arg-115, and Gly-183–Asn-184 each bind substrate. Residue His-9 is the Tele-phosphohistidine intermediate of the active site. Glu-87 serves as the catalytic Proton donor/acceptor.

Belongs to the phosphoglycerate mutase family. BPG-dependent PGAM subfamily.

It catalyses the reaction (2R)-2-phosphoglycerate = (2R)-3-phosphoglycerate. It participates in carbohydrate degradation; glycolysis; pyruvate from D-glyceraldehyde 3-phosphate: step 3/5. Functionally, catalyzes the interconversion of 2-phosphoglycerate and 3-phosphoglycerate. This chain is 2,3-bisphosphoglycerate-dependent phosphoglycerate mutase, found in Coprothermobacter proteolyticus (strain ATCC 35245 / DSM 5265 / OCM 4 / BT).